Here is a 657-residue protein sequence, read N- to C-terminus: Translation factor GUF1, mitochondrial (657 aa).

Residues 1 to 39 (MRGCLQSVKWLTSALRPSQSLASSTRYPRRLLSTSAPRN) constitute a mitochondrion transit peptide. The 181-residue stretch at 59-239 (ERFRNFCIVA…TVIEQIPAPV (181 aa)) folds into the tr-type G domain. Residues 121–128 (HQGEDYLL), 185–189 (INKVD), and 239–242 (VGDR) contribute to the GTP site.

This sequence belongs to the TRAFAC class translation factor GTPase superfamily. Classic translation factor GTPase family. LepA subfamily.

It localises to the mitochondrion inner membrane. It carries out the reaction GTP + H2O = GDP + phosphate + H(+). Promotes mitochondrial protein synthesis. May act as a fidelity factor of the translation reaction, by catalyzing a one-codon backward translocation of tRNAs on improperly translocated ribosomes. Binds to mitochondrial ribosomes in a GTP-dependent manner. The protein is Translation factor GUF1, mitochondrial of Ajellomyces capsulatus (strain H143) (Darling's disease fungus).